A 188-amino-acid polypeptide reads, in one-letter code: dTTP/UTP pyrophosphatase (188 aa).

Aspartate 70 (proton acceptor) is an active-site residue.

This sequence belongs to the Maf family. YhdE subfamily. The cofactor is a divalent metal cation.

Its subcellular location is the cytoplasm. It carries out the reaction dTTP + H2O = dTMP + diphosphate + H(+). The enzyme catalyses UTP + H2O = UMP + diphosphate + H(+). In terms of biological role, nucleoside triphosphate pyrophosphatase that hydrolyzes dTTP and UTP. May have a dual role in cell division arrest and in preventing the incorporation of modified nucleotides into cellular nucleic acids. The sequence is that of dTTP/UTP pyrophosphatase from Clostridium botulinum (strain Eklund 17B / Type B).